Reading from the N-terminus, the 87-residue chain is Small ribosomal subunit protein uS17 (87 aa).

Belongs to the universal ribosomal protein uS17 family. Part of the 30S ribosomal subunit.

One of the primary rRNA binding proteins, it binds specifically to the 5'-end of 16S ribosomal RNA. In Anoxybacillus flavithermus (strain DSM 21510 / WK1), this protein is Small ribosomal subunit protein uS17.